Consider the following 492-residue polypeptide: MTLWINGDWITGQGERRRKTNPVSGEILWQGNDANAAQVAEACQAARAAFPRWARQPFAARQAIVEKFAVLLEAHKAELTEVIARETGKPRWEAATEVTAMINKIAISIKAYHARTGEQKSELVDGAATLRHRPHGVLAVFGPYNFPGHLPNGHIVPALLAGNTLIFKPSELTPWTGETVIKLWERAGLPAGVLNLVQGGRETGQALSSLDDLDGLLFTGSASTGYQLHRQLSGQPEKILALEMGGNNPLIIEDVANIDAAVHLTLQSAFITAGQRCTCARRLLVKQGAQGDAFLARLVDVAGRLQPGRWDDDPQSFIGGLISAQAAQHVMEAWRQREALGGRTLLAPRKVKEGTSLLTPGIIELTGVADVPDEEVFGPLLNVWRYAHFDEAIRLANNTRFGLSCGLVSTDRAQFEQLLLEARAGIVNWNKPLTGAASTAPFGGVGASGNHRPSAWYAADYCAWPMASLESPELTLPATLSPGLDFSRREAV.

220-225 provides a ligand contact to NAD(+); sequence GSASTG. Active-site residues include glutamate 243 and cysteine 277.

Belongs to the aldehyde dehydrogenase family. AstD subfamily.

The enzyme catalyses N-succinyl-L-glutamate 5-semialdehyde + NAD(+) + H2O = N-succinyl-L-glutamate + NADH + 2 H(+). The protein operates within amino-acid degradation; L-arginine degradation via AST pathway; L-glutamate and succinate from L-arginine: step 4/5. Catalyzes the NAD-dependent reduction of succinylglutamate semialdehyde into succinylglutamate. This chain is N-succinylglutamate 5-semialdehyde dehydrogenase, found in Salmonella heidelberg (strain SL476).